Reading from the N-terminus, the 135-residue chain is Large ribosomal subunit protein bL17 (135 aa).

This sequence belongs to the bacterial ribosomal protein bL17 family. As to quaternary structure, part of the 50S ribosomal subunit. Contacts protein L32.

The protein is Large ribosomal subunit protein bL17 of Listeria innocua serovar 6a (strain ATCC BAA-680 / CLIP 11262).